We begin with the raw amino-acid sequence, 1024 residues long: Beta-galactosidase (1024 aa).

Substrate is bound by residues Asn-103 and Asp-202. A Na(+)-binding site is contributed by Asp-202. 3 residues coordinate Mg(2+): Glu-417, His-419, and Glu-462. Residues Glu-462 and 538–541 (EYAH) contribute to the substrate site. The Proton donor role is filled by Glu-462. Catalysis depends on Glu-538, which acts as the Nucleophile. Asn-598 contacts Mg(2+). Positions 602 and 605 each coordinate Na(+). Asn-605 and Trp-1000 together coordinate substrate.

Belongs to the glycosyl hydrolase 2 family. As to quaternary structure, homotetramer. Mg(2+) is required as a cofactor. Na(+) serves as cofactor.

The enzyme catalyses Hydrolysis of terminal non-reducing beta-D-galactose residues in beta-D-galactosides.. This is Beta-galactosidase from Escherichia coli O157:H7.